We begin with the raw amino-acid sequence, 499 residues long: Probable lipid II flippase MurJ (499 aa).

A run of 14 helical transmembrane segments spans residues 4–24 (LFRASLLFSLGILLSRIFGYV), 26–46 (DATVAYYFGASAVSDAFFIAF), 88–108 (LLITFSLSVVIIGLLFPEEII), 130–150 (FTILYLPLVSFYAYSMAILLV), 154–174 (FFVPSVSQTLFNLGFILSLVI), 184–204 (LALAVLIGGLFQIIPNTFLLF), 227–247 (FLFTLGGFSANQLSLFVDTFL), 265–285 (IYLLPISLFSISLSNTLLALV), 297–317 (TALKLTLMLSIPSSFGLFFLS), 335–355 (LFYTSGLLSLYAFSVPFYSLQ), 375–395 (AFLSVFLEALFGSVFIFLLNF), 396–416 (GVYSFPLAALISSSSVLVYLY), 425–445 (IPFGNLIKYLIASSFMGGLVY), and 455–475 (FILVSFIPIYALFYYVFLIIL).

The protein belongs to the MurJ/MviN family.

It is found in the cell inner membrane. It participates in cell wall biogenesis; peptidoglycan biosynthesis. Its function is as follows. Involved in peptidoglycan biosynthesis. Transports lipid-linked peptidoglycan precursors from the inner to the outer leaflet of the cytoplasmic membrane. The chain is Probable lipid II flippase MurJ from Aquifex aeolicus (strain VF5).